Here is a 237-residue protein sequence, read N- to C-terminus: Phosphoribosylaminoimidazole-succinocarboxamide synthase (237 aa).

The protein belongs to the SAICAR synthetase family.

It carries out the reaction 5-amino-1-(5-phospho-D-ribosyl)imidazole-4-carboxylate + L-aspartate + ATP = (2S)-2-[5-amino-1-(5-phospho-beta-D-ribosyl)imidazole-4-carboxamido]succinate + ADP + phosphate + 2 H(+). It participates in purine metabolism; IMP biosynthesis via de novo pathway; 5-amino-1-(5-phospho-D-ribosyl)imidazole-4-carboxamide from 5-amino-1-(5-phospho-D-ribosyl)imidazole-4-carboxylate: step 1/2. This Pectobacterium atrosepticum (strain SCRI 1043 / ATCC BAA-672) (Erwinia carotovora subsp. atroseptica) protein is Phosphoribosylaminoimidazole-succinocarboxamide synthase.